Here is a 173-residue protein sequence, read N- to C-terminus: Large ribosomal subunit protein uL16 (173 aa).

The protein belongs to the universal ribosomal protein uL16 family.

This is Large ribosomal subunit protein uL16 from Methanococcus maripaludis (strain DSM 14266 / JCM 13030 / NBRC 101832 / S2 / LL).